The chain runs to 330 residues: Peroxidase 70 (330 aa).

The first 24 residues, 1-24 (MRSFTNLNPCYVLLPFFLVLATNA), serve as a signal peptide directing secretion. Disulfide bonds link cysteine 43–cysteine 119, cysteine 76–cysteine 81, cysteine 125–cysteine 326, and cysteine 202–cysteine 234. Catalysis depends on histidine 74, which acts as the Proton acceptor. The Ca(2+) site is built by aspartate 75, valine 78, glycine 80, aspartate 82, and serine 84. Proline 165 contributes to the substrate binding site. Histidine 195 lines the heme b pocket. Threonine 196 is a Ca(2+) binding site. Ca(2+) contacts are provided by aspartate 247, serine 250, and aspartate 255.

This sequence belongs to the peroxidase family. Classical plant (class III) peroxidase subfamily. Requires heme b as cofactor. The cofactor is Ca(2+).

The protein resides in the secreted. It catalyses the reaction 2 a phenolic donor + H2O2 = 2 a phenolic radical donor + 2 H2O. In terms of biological role, removal of H(2)O(2), oxidation of toxic reductants, biosynthesis and degradation of lignin, suberization, auxin catabolism, response to environmental stresses such as wounding, pathogen attack and oxidative stress. These functions might be dependent on each isozyme/isoform in each plant tissue. The sequence is that of Peroxidase 70 (PER70) from Arabidopsis thaliana (Mouse-ear cress).